The sequence spans 302 residues: tRNA pseudouridine synthase B (302 aa).

The active-site Nucleophile is Asp-45.

This sequence belongs to the pseudouridine synthase TruB family. Type 1 subfamily.

It catalyses the reaction uridine(55) in tRNA = pseudouridine(55) in tRNA. Its function is as follows. Responsible for synthesis of pseudouridine from uracil-55 in the psi GC loop of transfer RNAs. The protein is tRNA pseudouridine synthase B of Francisella tularensis subsp. novicida (strain U112).